A 787-amino-acid chain; its full sequence is Phenylalanine--tRNA ligase beta subunit (787 aa).

A tRNA-binding domain is found at 39–149 (APAFSGVVVA…EDAPVGTNIR (111 aa)). Residues 400–475 (PEAKQVGLRL…RVYGYENIPD (76 aa)) form the B5 domain. Residues D453, D459, E462, and E463 each contribute to the Mg(2+) site. Positions 694–786 (SKFQPVRRDL…VATEAGARLR (93 aa)) constitute an FDX-ACB domain.

It belongs to the phenylalanyl-tRNA synthetase beta subunit family. Type 1 subfamily. In terms of assembly, tetramer of two alpha and two beta subunits. Mg(2+) serves as cofactor.

The protein localises to the cytoplasm. It carries out the reaction tRNA(Phe) + L-phenylalanine + ATP = L-phenylalanyl-tRNA(Phe) + AMP + diphosphate + H(+). This Neisseria gonorrhoeae (strain ATCC 700825 / FA 1090) protein is Phenylalanine--tRNA ligase beta subunit.